The following is a 435-amino-acid chain: Probable aminotransferase gliI (435 aa).

Lys-266 is subject to N6-(pyridoxal phosphate)lysine.

It belongs to the class-I pyridoxal-phosphate-dependent aminotransferase family. The cofactor is pyridoxal 5'-phosphate.

The protein operates within mycotoxin biosynthesis. In terms of biological role, probable aminotransferase; part of the gene cluster that mediates the biosynthesis of gliotoxin, a member of the epipolythiodioxopiperazine (ETP) class of toxins characterized by a disulfide bridged cyclic dipeptide. The first step in gliotoxin biosynthesis is the condensation of serine and phenylalanine to form the cyclo-L-phenylalanyl-L-serine diketopiperazine (DKP) by the NRPS gliP. GliP is also able to produce the DKP cyclo-L-tryptophanyl-L-serine, suggesting that the substrate specificity of the first adenylation (A) domain in gliP is sufficiently relaxed to accommodate both L-Phe and L-Trp. The cytochrome P450 monooxygenase gliC has been shown to catalyze the subsequent hydroxylation of the alpha-carbon of L-Phe in cyclo-L-phenylalanyl-L-serine whereas the second cytochrome P450 enzyme, gliF, is presumably involved in the modification of the DKP side chain. The glutathione S-transferase (GST) gliG then forms a bis-glutathionylated biosynthetic intermediate which is responsible for the sulfurization of gliotoxin. This bis-glutathionylated intermediate is subsequently processed by the gamma-glutamyl cyclotransferase gliK to remove both gamma-glutamyl moieties. Subsequent processing via gliI yields a biosynthetic intermediate, which is N-methylated via the N-methyltransferase gliN, before the gliotoxin oxidoreductase gliT-mediated disulfide bridge closure. GliN-mediated amide methylation confers stability to ETP, damping the spontaneous formation of tri- and tetrasulfides. Intracellular dithiol gliotoxin oxidized by gliT is subsequently effluxed by gliA. Gliotoxin contributes to pathogenesis during invasive aspergillosis. In macrophages and neutrophils, gliotoxin showed inhibition of various different cell functions including cytokine production, antigen presentation, phagocytosis, and production of reactive oxygen species. This is Probable aminotransferase gliI from Aspergillus fumigatus (strain ATCC MYA-4609 / CBS 101355 / FGSC A1100 / Af293) (Neosartorya fumigata).